The primary structure comprises 78 residues: Putative membrane protein insertion efficiency factor (78 aa).

The protein belongs to the UPF0161 family.

It is found in the cell membrane. Could be involved in insertion of integral membrane proteins into the membrane. This Bacillus cereus (strain G9842) protein is Putative membrane protein insertion efficiency factor.